A 637-amino-acid chain; its full sequence is 3D-(3,5/4)-trihydroxycyclohexane-1,2-dione hydrolase (637 aa).

E66 provides a ligand contact to thiamine diphosphate. The thiamine pyrophosphate binding stretch occupies residues 442-522 (SLPGDLQRLW…INVLLFDNSG (81 aa)). Residues D493 and N520 each contribute to the Mg(2+) site.

The protein belongs to the TPP enzyme family. Requires Mg(2+) as cofactor. Thiamine diphosphate serves as cofactor.

The enzyme catalyses 3D-3,5/4-trihydroxycyclohexane-1,2-dione + H2O = 5-deoxy-D-glucuronate + H(+). It functions in the pathway polyol metabolism; myo-inositol degradation into acetyl-CoA; acetyl-CoA from myo-inositol: step 3/7. Its function is as follows. Involved in the cleavage of the C1-C2 bond of 3D-(3,5/4)-trihydroxycyclohexane-1,2-dione (THcHDO) to yield 5-deoxy-glucuronate (5DG). In Bacillus velezensis (strain DSM 23117 / BGSC 10A6 / LMG 26770 / FZB42) (Bacillus amyloliquefaciens subsp. plantarum), this protein is 3D-(3,5/4)-trihydroxycyclohexane-1,2-dione hydrolase.